The following is a 341-amino-acid chain: Platelet-activating factor receptor (341 aa).

Residues 1-16 (MEHNGSFRVDSEFRYT) are Extracellular-facing. Asparagine 4 carries an N-linked (GlcNAc...) asparagine glycan. Residues 17–38 (LFPIVYSVIFILGVVANGYVLW) traverse the membrane as a helical segment. Residues 39–54 (VFANLYPSKKLNEIKI) lie on the Cytoplasmic side of the membrane. The chain crosses the membrane as a helical span at residues 55-74 (FMVNLTMADLLFLITLPLWI). The Extracellular segment spans residues 75–91 (VYYYNEGDWILPNFLCN). An intrachain disulfide couples cysteine 90 to cysteine 173. The chain crosses the membrane as a helical span at residues 92–113 (VAGCLFFINTYCSVAFLGVITY). The Cytoplasmic portion of the chain corresponds to 114-133 (NRYQAVAYPIKTAQATTRKR). A helical membrane pass occupies residues 134 to 155 (GISLSLIIWVSIVATASYFLAT). At 156-184 (DSTNLVPNKDGSGNITRCFEHYEPYSVPI) the chain is on the extracellular side. Asparagine 169 carries an N-linked (GlcNAc...) asparagine glycan. The helical transmembrane segment at 185–205 (LVVHVFIAFCFFLVFFLIFYC) threads the bilayer. Over 206–233 (NLVIIHTLLTQPMRQQRKAGVKRRALWM) the chain is Cytoplasmic. The chain crosses the membrane as a helical span at residues 234–254 (VCTVLAVFIICFVPHHVVQLP). Residues 255–275 (WTLAELGYQTNFHQAINDAHQ) lie on the Extracellular side of the membrane. A helical transmembrane segment spans residues 276–295 (ITLCLLSTNCVLDPVIYCFL). Topologically, residues 296 to 341 (TKKFRKHLSEKFYSMRSSRKCSRATSDTCTEVIVPANQTPIVSLKN) are cytoplasmic.

Belongs to the G-protein coupled receptor 1 family. Interacts with ARRB1. In terms of tissue distribution, found in a range of organs. Expressed most strongly in spleen, followed by skeletal muscle, lung and small intestine. Expressed at moderate levels in the heart. Expressed at relatively low levels in the brain, liver and kidney.

Its subcellular location is the cell membrane. In terms of biological role, receptor for platelet activating factor, a chemotactic phospholipid mediator that possesses potent inflammatory, smooth-muscle contractile and hypotensive activity. Seems to mediate its action via a G protein that activates a phosphatidylinositol-calcium second messenger system. In Mus musculus (Mouse), this protein is Platelet-activating factor receptor (Ptafr).